A 196-amino-acid polypeptide reads, in one-letter code: MTPEEVLEEFRSAGALLQGHFILSSGLRSPTFLQKMTIFSDPARTERLCRALAEVITARFGRIDIVVSPAIGGIIPGYETARHLGAKAIFVERDPGGPFTLRRGFSIPAGSRAVIVEDIVTTGLSARECLASLKDEAGEVVGAACLIDRSGGRGEIGLPLVSLVTLDIPAYSPDALPPELAAIPPVKPGSRALPKP.

117 to 125 (EDIVTTGLS) lines the 5-phospho-alpha-D-ribose 1-diphosphate pocket. Positions 121 and 149 each coordinate orotate.

The protein belongs to the purine/pyrimidine phosphoribosyltransferase family. PyrE subfamily. In terms of assembly, homodimer. Requires Mg(2+) as cofactor.

The enzyme catalyses orotidine 5'-phosphate + diphosphate = orotate + 5-phospho-alpha-D-ribose 1-diphosphate. It functions in the pathway pyrimidine metabolism; UMP biosynthesis via de novo pathway; UMP from orotate: step 1/2. In terms of biological role, catalyzes the transfer of a ribosyl phosphate group from 5-phosphoribose 1-diphosphate to orotate, leading to the formation of orotidine monophosphate (OMP). The sequence is that of Orotate phosphoribosyltransferase from Methylorubrum populi (strain ATCC BAA-705 / NCIMB 13946 / BJ001) (Methylobacterium populi).